The sequence spans 931 residues: Probable zinc protease PqqL (931 aa).

His-80 lines the Zn(2+) pocket. Glu-83 acts as the Proton acceptor in catalysis. Zn(2+) is bound by residues His-84 and Glu-160.

Belongs to the peptidase M16 family. The cofactor is Zn(2+).

This is Probable zinc protease PqqL (pqqL) from Escherichia coli (strain K12).